We begin with the raw amino-acid sequence, 1607 residues long: Putative molluscan insulin-related peptide(s) receptor (1607 aa).

The signal sequence occupies residues 1–35 (MHPGSISFNMIINKCIPICLFILFIMMMEFTVSKA). Residues asparagine 82, asparagine 188, asparagine 245, asparagine 275, asparagine 332, asparagine 343, asparagine 495, asparagine 520, asparagine 663, asparagine 710, asparagine 778, asparagine 796, asparagine 802, asparagine 868, asparagine 879, asparagine 940, and asparagine 953 are each glycosylated (N-linked (GlcNAc...) asparagine). Fibronectin type-III domains follow at residues 517–632 (HDLN…TYPF), 636–726 (EPTD…SKEE), and 756–861 (LPDE…TKDS). Residues 698–975 (EKVKIEEEGK…RPPDPESSNT (278 aa)) lie on the Extracellular side of the membrane. In terms of domain architecture, Fibronectin type-III 4 spans 870 to 967 (TTVDTEIETN…LERFFIVPRP (98 aa)). A helical membrane pass occupies residues 976 to 996 (LLIVAIVLAFFGVLTVSLIVA). Residues 997–1607 (CVYYKQKIRS…WSTLKMVLVL (611 aa)) lie on the Cytoplasmic side of the membrane. In terms of domain architecture, Protein kinase spans 1037–1308 (IKLIKELGQG…AIIEYLLPKL (272 aa)). ATP contacts are provided by residues 1043-1051 (LGQGSFGMV) and lysine 1072. Catalysis depends on aspartate 1173, which acts as the Proton acceptor. Tyrosine 1199 bears the Phosphotyrosine; by autocatalysis mark. Disordered regions lie at residues 1328 to 1352 (GAGE…LSCE) and 1501 to 1539 (TLNG…SSSW). Positions 1503–1515 (NGNQSSHNNNSFE) are enriched in polar residues. Over residues 1524–1538 (SGPASESSNGVSSSS) the composition is skewed to low complexity.

The protein belongs to the protein kinase superfamily. Tyr protein kinase family. Insulin receptor subfamily. Probable tetramer of 2 alpha and 2 beta chains linked by disulfide bonds. The alpha chains contribute to the formation of the ligand-binding domain, while the beta chains carry the kinase domain. Requires Mn(2+) as cofactor.

Its subcellular location is the membrane. It catalyses the reaction L-tyrosyl-[protein] + ATP = O-phospho-L-tyrosyl-[protein] + ADP + H(+). Functionally, this receptor probably binds to the four different molluscan insulin-related peptides and has a tyrosine-protein kinase activity. The protein is Putative molluscan insulin-related peptide(s) receptor of Lymnaea stagnalis (Great pond snail).